The chain runs to 100 residues: U-myrmeciitoxin(01)-Mg7c (100 aa).

Residues 1 to 17 (MKLSYLSLALAIILVLA) form the signal peptide. Positions 18 to 50 (IVYSPHMEVKALADAEPDAIGFADAFGEADAEP) are excised as a propeptide. An O-linked (GalNAc...) serine glycan is attached at Ser-85. O-linked (GalNAc...) threonine glycans are attached at residues Thr-94 and Thr-95.

Belongs to the formicidae venom precursor-01 superfamily. Glycosylation is critical to maintaining the aqueous solubility of this protein, but does not directly contribute to its activity. Expressed by the venom gland.

The protein localises to the secreted. It localises to the target cell membrane. Functionally, neurotoxin that triggers pain behavior and inflammation in mammals, and is paralytic and lethal to insects. Causes a time-dependent increase in cell leak current. May act by targeting membranes. The sequence is that of U-myrmeciitoxin(01)-Mg7c from Myrmecia gulosa (Red bulldog ant).